Here is a 126-residue protein sequence, read N- to C-terminus: Protein C10 (126 aa).

Ala-2 is subject to N-acetylalanine.

Belongs to the UPF0456 family. As to expression, ubiquitously expressed, with higher expression in lung.

It localises to the cytoplasm. Functionally, in brain, may be required for corpus callosum development. The polypeptide is Protein C10 (Grcc10) (Mus musculus (Mouse)).